Consider the following 204-residue polypeptide: MVWAWQQWLSPRPQKRTKNTSQVAFYTSENAALYEPLSKPDGNWYVRETHFRENPNVRAGLTGPPLHLHLQQDEYFKVEQGVLGAVKDGVEVAITKNDPVLHIPRGTRHRFWPHPSSTEDLVFTAWADPCKDHDHILDLNFLRNLAGYLADCDSEGLQPSPFQLILFFHEASSILCPPFLNWMPLWLLIWVHNGLAWIAREFLG.

It belongs to the oxidoreductase OpS7 family.

It participates in secondary metabolite biosynthesis. In terms of biological role, oxidoreductase; part of the gene cluster that mediates the biosynthesis of iso-A82775C, a enylepoxycyclohexane and biosynthetic precursor of the chloropestolide anticancer natural products. Within the cluster, the prenyltransferase iacE prenylates siccayne to generate pestalodiol E, using dimethylallyl diphosphate (DMAPP) as cosubstrate. The probable oxidoreductase iacF is then involved in the epoxidation of pestalodiol F to pestalodiol F, which is further converted to pestalofone A by the short-chain dehydrogenase/reductase iacG. Iso-A82775C is subsequently generated from pestalofone A by the short-chain dehydrogenase/reductase iacC. Iso-A82775C is further condensed with maldoxin via a Diels-Alder reaction to produce the anticancer natural products chloropestolides A to E. This is Oxidoreductase iacF from Pestalotiopsis fici (strain W106-1 / CGMCC3.15140).